A 758-amino-acid polypeptide reads, in one-letter code: 3-isopropylmalate dehydratase (758 aa).

[4Fe-4S] cluster-binding residues include Cys359, Cys420, and Cys423. Phosphoserine occurs at positions 486 and 488.

It belongs to the aconitase/IPM isomerase family. Requires [4Fe-4S] cluster as cofactor.

The enzyme catalyses (2R,3S)-3-isopropylmalate = (2S)-2-isopropylmalate. Its pathway is amino-acid biosynthesis; L-leucine biosynthesis; L-leucine from 3-methyl-2-oxobutanoate: step 2/4. Catalyzes the isomerization between 2-isopropylmalate and 3-isopropylmalate, via the formation of 2-isopropylmaleate. This is 3-isopropylmalate dehydratase (leu2) from Schizosaccharomyces pombe (strain 972 / ATCC 24843) (Fission yeast).